The sequence spans 124 residues: Large ribosomal subunit protein uL18 (124 aa).

It belongs to the universal ribosomal protein uL18 family. As to quaternary structure, part of the 50S ribosomal subunit; part of the 5S rRNA/L5/L18/L25 subcomplex. Contacts the 5S and 23S rRNAs.

Its function is as follows. This is one of the proteins that bind and probably mediate the attachment of the 5S RNA into the large ribosomal subunit, where it forms part of the central protuberance. This chain is Large ribosomal subunit protein uL18, found in Aquifex pyrophilus.